The chain runs to 165 residues: MASEHSFDISAQVDMMEVKNALETSKKELTARYDFKGVTAQIELSEKDKTITILSSSGNKVDALKDIVISKLIKRNIPPVALSESKRESASGGNIKATLKLNDTLDTENSKKITKAIKDAKLKVTATIRGEEVRVSGKSIDDLQECIRLVKALNLELPINFKNLK.

This sequence belongs to the YajQ family.

Functionally, nucleotide-binding protein. The protein is Nucleotide-binding protein Ccur92_01650 of Campylobacter curvus (strain 525.92).